The following is a 93-amino-acid chain: UPF0147 protein PH1921.2 (93 aa).

Belongs to the UPF0147 family.

The protein is UPF0147 protein PH1921.2 of Pyrococcus horikoshii (strain ATCC 700860 / DSM 12428 / JCM 9974 / NBRC 100139 / OT-3).